The following is a 252-amino-acid chain: Imidazole glycerol phosphate synthase subunit HisF (252 aa).

Active-site residues include D11 and D130.

It belongs to the HisA/HisF family. As to quaternary structure, heterodimer of HisH and HisF.

The protein localises to the cytoplasm. The catalysed reaction is 5-[(5-phospho-1-deoxy-D-ribulos-1-ylimino)methylamino]-1-(5-phospho-beta-D-ribosyl)imidazole-4-carboxamide + L-glutamine = D-erythro-1-(imidazol-4-yl)glycerol 3-phosphate + 5-amino-1-(5-phospho-beta-D-ribosyl)imidazole-4-carboxamide + L-glutamate + H(+). Its pathway is amino-acid biosynthesis; L-histidine biosynthesis; L-histidine from 5-phospho-alpha-D-ribose 1-diphosphate: step 5/9. IGPS catalyzes the conversion of PRFAR and glutamine to IGP, AICAR and glutamate. The HisF subunit catalyzes the cyclization activity that produces IGP and AICAR from PRFAR using the ammonia provided by the HisH subunit. The protein is Imidazole glycerol phosphate synthase subunit HisF of Bacillus licheniformis (strain ATCC 14580 / DSM 13 / JCM 2505 / CCUG 7422 / NBRC 12200 / NCIMB 9375 / NCTC 10341 / NRRL NRS-1264 / Gibson 46).